The sequence spans 661 residues: MKKFKLVSDFKPTGDQPKAIEMLTEGILKGEKFQTLLGVTGSGKTFTMAKVIENVQRPTLVLAHNKTLAAQLCSEFREFFPENAVEFFVSYYDYYQPEAYIPETDTYIEKDSSINEEIDKLRHSATSALFERRDVIIVASVSCIYSLGSPEDYLNLTISLRPGMTKDRDEVIRDLIRMQYERNDIDFRRGRFRVRGDVLEVFPASNTDRAIRIEFFGDEIERITEFDVVTGEVIGRRNHVAIFPASHYVTTAEKLKRAIKSIEEELEQRLKELRSMGKLVEAQRLEQRTRYDIEMLQEMGFCKGIENYSRHLTGRPPGSPPYTLLDYFPNDFIMFIDESHVTIPQVRAMYNGDKARKDTLVEYGFRLPSAYDNRPLTFEEFEEKLNQVIFVSATPGPYELKKSSRIVEQIIRPTGLVDPEIEVHPVQGQIDHLIGEIRKRVEKNQRVLVTTLTKKMAESLTEYLKDVGIRVRYMHSDIDTIERMQIIRDLRLGKFDVLVGINLLREGLDLPEVSLVAILDADKEGFLRSETSLIQTIGRAARNVDGKVIMYADRITNAMQKAIDETNRRRKIQIEYNQKHGIVPQTVRKGIRQIIEATVSVAEEEEKYEVVEKEIVENMTKEEIEEYIKELEQEMKKLAIELEFEKAAKVRDKIFELKKLL.

Residues 25–178 (EGILKGEKFQ…DEVIRDLIRM (154 aa)) form the Helicase ATP-binding domain. An ATP-binding site is contributed by 38–45 (GVTGSGKT). A Beta-hairpin motif is present at residues 91 to 114 (YYDYYQPEAYIPETDTYIEKDSSI). The region spanning 429 to 591 (QIDHLIGEIR…IVPQTVRKGI (163 aa)) is the Helicase C-terminal domain. The region spanning 625–660 (EEYIKELEQEMKKLAIELEFEKAAKVRDKIFELKKL) is the UVR domain.

It belongs to the UvrB family. As to quaternary structure, forms a heterotetramer with UvrA during the search for lesions. Interacts with UvrC in an incision complex.

It is found in the cytoplasm. Functionally, the UvrABC repair system catalyzes the recognition and processing of DNA lesions. A damage recognition complex composed of 2 UvrA and 2 UvrB subunits scans DNA for abnormalities. Upon binding of the UvrA(2)B(2) complex to a putative damaged site, the DNA wraps around one UvrB monomer. DNA wrap is dependent on ATP binding by UvrB and probably causes local melting of the DNA helix, facilitating insertion of UvrB beta-hairpin between the DNA strands. Then UvrB probes one DNA strand for the presence of a lesion. If a lesion is found the UvrA subunits dissociate and the UvrB-DNA preincision complex is formed. This complex is subsequently bound by UvrC and the second UvrB is released. If no lesion is found, the DNA wraps around the other UvrB subunit that will check the other stand for damage. The protein is UvrABC system protein B of Caldicellulosiruptor bescii (strain ATCC BAA-1888 / DSM 6725 / KCTC 15123 / Z-1320) (Anaerocellum thermophilum).